The chain runs to 406 residues: Inner kinetochore subunit OKP1 (406 aa).

2 disordered regions span residues 1 to 37 (MAAD…SDSS) and 59 to 122 (TQSK…TSGE). Residues 8-21 (FLQNIENDSINNGQ) show a composition bias toward polar residues. Positions 26 to 37 (SPNRSSSESDSS) are enriched in low complexity. Residues 69-78 (NSDDAEEGEI) are compositionally biased toward acidic residues. Position 70 is a phosphoserine (Ser-70). 2 stretches are compositionally biased toward basic and acidic residues: residues 79 to 89 (EERTNKEEGQY) and 97 to 106 (LRFEVGKEST). The segment covering 107 to 122 (GKLQSHLSDGSATSGE) has biased composition (polar residues). A coiled-coil region spans residues 239–285 (SKRQFIQNRYSQELQNNERLEAILSREQNLLEETRKLCMNLKTNNKK). Positions 317–340 (MHPDGPVTFRNDSHELNLMLNDPI) are CTF19-MCM21 binding motif. An interaction with NKP1-NKP2 region spans residues 353–400 (VLSLLPSLKEYTKKSKELKETMGQMISDSHEEEIKEVFVPHHESHQDK). The interval 379–406 (SDSHEEEIKEVFVPHHESHQDKTEEDIH) is disordered. The segment covering 380-406 (DSHEEEIKEVFVPHHESHQDKTEEDIH) has biased composition (basic and acidic residues).

This sequence belongs to the CENP-Q/OKP1 family. As to quaternary structure, component of the heterotetrameric kinetochore subcomplex COMA, which consists of AME1, CTF19, MCM21 and OKP1. The COMA subcomplex is part of a larger constitutive centromere-associated network (CCAN) (also known as central kinetochore CTF19 complex in yeast), which is composed of at least AME1, CHL4, CNN1, CTF3, CTF19, IML3, MCM16, MCM21, MCM22, MHF1, MHF2, MIF2, NKP1, NKP2, OKP1 and WIP1. COMA binds the centromeric nucleosome-binding protein MIF2, and to the outer kinetochore MIND subcomplex. OKP1 interacts directly with AME1, with an NKP1-NKP2 dimer, and with CTF19-MCM21.

It localises to the nucleus. It is found in the chromosome. The protein resides in the centromere. The protein localises to the kinetochore. In terms of biological role, component of the kinetochore, a multiprotein complex that assembles on centromeric DNA and attaches chromosomes to spindle microtubules, mediating chromosome segregation and sister chromatid segregation during meiosis and mitosis. Component of the inner kinetochore COMA complex, which connects centromere-associated proteins and the outer kinetochore. COMA interacts with other inner kinetochore proteins to form the inner kinetochore constitutive centromere-associated network (CCAN), which serves as a structural platform for outer kinetochore assembly. This Saccharomyces cerevisiae (strain ATCC 204508 / S288c) (Baker's yeast) protein is Inner kinetochore subunit OKP1.